A 123-amino-acid polypeptide reads, in one-letter code: Large ribosomal subunit protein uL29 (123 aa).

A disordered region spans residues 84–123; the sequence is RPKKTRAMRRRLNKHEEGLKTKKQQRKERLYPPRKYAVKA. Residues 86 to 96 are compositionally biased toward basic residues; the sequence is KKTRAMRRRLN.

It belongs to the universal ribosomal protein uL29 family. In terms of assembly, component of the large ribosomal subunit.

It localises to the cytoplasm. In terms of biological role, component of the large ribosomal subunit. The ribosome is a large ribonucleoprotein complex responsible for the synthesis of proteins in the cell. The protein is Large ribosomal subunit protein uL29 (RPL35) of Ophiophagus hannah (King cobra).